A 557-amino-acid polypeptide reads, in one-letter code: Copine-6 (557 aa).

C2 domains lie at 1-127 (MSDP…TKPL) and 134-263 (TAGK…MQWD). Residues Asp-167, Asp-173, Asp-229, Asp-231, and Asp-237 each contribute to the Ca(2+) site. The linker region stretch occupies residues 244–303 (STFQEMQEGTANPGQEMQWDCINPKYRDKKKNYKSSGTVVLAQCTVEKVHTFLDYIMGGC). One can recognise a VWFA domain in the interval 306–526 (SFTVAIDFTA…ALAKCVLAEV (221 aa)).

This sequence belongs to the copine family. In terms of assembly, interacts (via second C2 domain) with OS9 (via C-terminus); this interaction occurs in a calcium-dependent manner in vitro. May interact with NECAB1. Requires Ca(2+) as cofactor. Expressed in the brain. Expressed in pyramidal cells, granule cells, and neurons in the dentate gyrus of the hippocampus and in granule cells of the olfactory bulb (at protein level). Expressed in pyramidal cells of the CA1-CA3 regions, in granule cells of the dentate gyrus, in granule cells of the olfactory bulbs, in the mitral cell layer and in neurons of the cerebral cortex layer II, brainstem and spinal cord. Not detected in glial cells.

Its subcellular location is the cytoplasm. The protein resides in the cell membrane. It is found in the endosome. The protein localises to the cytoplasmic vesicle. It localises to the clathrin-coated vesicle. Its subcellular location is the perikaryon. The protein resides in the cell projection. It is found in the dendrite. Its function is as follows. Calcium-dependent phospholipid-binding protein that plays a role in calcium-mediated intracellular processes. Binds phospholipid membranes in a calcium-dependent manner. Plays a role in dendrite formation by melanocytes. This Mus musculus (Mouse) protein is Copine-6.